The sequence spans 381 residues: Peptidoglycan glycosyltransferase MrdB (381 aa).

A run of 10 helical transmembrane segments spans residues 11–31, 40–60, 66–86, 99–119, 132–152, 156–176, 180–200, 263–283, 297–317, and 328–348; these read FDLL…LLIF, KQGV…FIPF, WLFV…FMGY, FISI…LLLA, YDWG…ALIL, DLGT…IVGL, VWLP…HFLH, FGFL…LHLF, IVAL…IAMT, and LPLF…FGIL.

It belongs to the SEDS family. MrdB/RodA subfamily.

It localises to the cell inner membrane. The catalysed reaction is [GlcNAc-(1-&gt;4)-Mur2Ac(oyl-L-Ala-gamma-D-Glu-L-Lys-D-Ala-D-Ala)](n)-di-trans,octa-cis-undecaprenyl diphosphate + beta-D-GlcNAc-(1-&gt;4)-Mur2Ac(oyl-L-Ala-gamma-D-Glu-L-Lys-D-Ala-D-Ala)-di-trans,octa-cis-undecaprenyl diphosphate = [GlcNAc-(1-&gt;4)-Mur2Ac(oyl-L-Ala-gamma-D-Glu-L-Lys-D-Ala-D-Ala)](n+1)-di-trans,octa-cis-undecaprenyl diphosphate + di-trans,octa-cis-undecaprenyl diphosphate + H(+). Its pathway is cell wall biogenesis; peptidoglycan biosynthesis. In terms of biological role, peptidoglycan polymerase that is essential for cell wall elongation. The polypeptide is Peptidoglycan glycosyltransferase MrdB (Helicobacter pylori (strain ATCC 700392 / 26695) (Campylobacter pylori)).